A 97-amino-acid chain; its full sequence is YcgL domain-containing protein CKO_01183 (97 aa).

Residues 1-85 form the YcgL domain; the sequence is MFCVIYRSSK…PPEDLLKQHL (85 aa). A disordered region spans residues 74 to 97; that stretch reads PPPPEDLLKQHLSAPGENKPDAKS.

This is YcgL domain-containing protein CKO_01183 from Citrobacter koseri (strain ATCC BAA-895 / CDC 4225-83 / SGSC4696).